We begin with the raw amino-acid sequence, 241 residues long: Platelet-derived growth factor subunit B (241 aa).

The N-terminal stretch at 1 to 20 (MNRCWALFLPLCCYLRLVSA) is a signal peptide. Residues 21–81 (EGDPIPEELY…ELESSSRGRR (61 aa)) constitute a propeptide, removed in mature form. Asn63 carries an N-linked (GlcNAc...) asparagine glycan. 3 disulfide bridges follow: Cys97-Cys141, Cys130-Cys178, and Cys134-Cys180. Residues 191–241 (RSPGTSREQRAKTPQARVTIRTVRIRRPPKGKHRKFKHTHDKAALKETLGA) constitute a propeptide, removed in mature form. The segment covering 217–230 (RPPKGKHRKFKHTH) has biased composition (basic residues). A disordered region spans residues 217–241 (RPPKGKHRKFKHTHDKAALKETLGA).

It belongs to the PDGF/VEGF growth factor family. Antiparallel homodimer; disulfide-linked. Antiparallel heterodimer with PDGFA; disulfide-linked. The PDGFB homodimer interacts with PDGFRA and PDGFRB homodimers, and with heterodimers formed by PDGFRA and PDGFRB. The heterodimer composed of PDGFA and PDGFB interacts with PDGFRB homodimers, and with heterodimers formed by PDGFRA and PDGFRB. Interacts with XLKD1. Interacts with LRP1. Interacts with SORL1 (via the N-terminal ectodomain). Interacts with CD82; this interaction inhibits PDGFB-mediated signaling pathway. As to expression, localized to vascular smooth muscle cells. Also weakly expressed by cortical interstitial cells but absent in tubules. Up-regulated in areas of renal fibrosis. In mice with unilateral ureteral obstruction, an increased expression in interstitial cells and in some tubules observed after day 4.

It is found in the secreted. In terms of biological role, growth factor that plays an essential role in the regulation of embryonic development, cell proliferation, cell migration, survival and chemotaxis. Potent mitogen for cells of mesenchymal origin. Required for normal proliferation and recruitment of pericytes and vascular smooth muscle cells in the central nervous system, skin, lung, heart and placenta. Required for normal blood vessel development, and for normal development of kidney glomeruli. Plays an important role in wound healing. Signaling is modulated by the formation of heterodimers with PDGFA. The sequence is that of Platelet-derived growth factor subunit B (Pdgfb) from Mus musculus (Mouse).